The sequence spans 100 residues: Small ribosomal subunit protein uS14c (100 aa).

The protein belongs to the universal ribosomal protein uS14 family. As to quaternary structure, part of the 30S ribosomal subunit.

The protein resides in the plastid. The protein localises to the chloroplast. In terms of biological role, binds 16S rRNA, required for the assembly of 30S particles. The sequence is that of Small ribosomal subunit protein uS14c from Bigelowiella natans (Pedinomonas minutissima).